Here is a 164-residue protein sequence, read N- to C-terminus: R-phycoerythrin alpha chain (164 aa).

Positions 47, 81, 82, 84, 88, 137, 139, and 142 each coordinate (2R,3E)-phycoerythrobilin.

This sequence belongs to the phycobiliprotein family. In terms of assembly, heterododecamer of 6 alpha and 6 beta chains. The basic functional unit of phycobiliproteins is a ring-shaped hexamer formed from two back-to-back trimers contacting via the alpha chain subunits. The trimers are composed of alpha/beta subunit heterodimers arranged around a three-fold axis of symmetry. The phycoerythrins also contain a gamma subunit which is located in the center of the hexamer. Post-translationally, contains two covalently linked phycoerythrobilin chromophores.

The protein localises to the plastid. The protein resides in the chloroplast thylakoid membrane. Its function is as follows. Light-harvesting photosynthetic tetrapyrrole chromophore-protein from the phycobiliprotein complex. This is R-phycoerythrin alpha chain (rpeA) from Agarophyton chilense (Red seaweed).